We begin with the raw amino-acid sequence, 333 residues long: NADH dehydrogenase (ubiquinone) complex I, assembly factor 6 (333 aa).

A mitochondrion-targeting transit peptide spans 1–44; it reads MAASAHGSVWGPLRLGIPGLCCRRPPLGLYARMRRLPGPEVSGR.

The protein belongs to the NDUFAF6 family. In terms of tissue distribution, widely expressed. A lower expression is observed in lung and kidney compared to heart, muscle and liver. In the kidney, expression is high in the basal zone of the proximal tubular cells.

It is found in the mitochondrion inner membrane. The protein resides in the cytoplasm. The protein localises to the nucleus. In terms of biological role, involved in the assembly of mitochondrial NADH:ubiquinone oxidoreductase complex (complex I) at early stages. May play a role in the biogenesis of complex I subunit MT-ND1. In Homo sapiens (Human), this protein is NADH dehydrogenase (ubiquinone) complex I, assembly factor 6 (NDUFAF6).